The following is a 235-amino-acid chain: MTQPASSRVVFDPSNPTTFSVEAIAAYTPVALIRLLNASGPLQPGHRVDIADARSIYTVGAAASAARARANHNANTIRRTAMFAETDPMTWLRPTVGLKRTFNPRIIRPQPPNPSMSLGISGPTILPQKTQSADQSALQQPAALAFSGSSPQHPPPQTTSASVGQQQHVVSGSSGQQPQQGAQSSTVQPTTGSPPAAQGVPQSTPPPTQNTPQGGKGQTLSHTGQSGNASRSRRV.

Residues 104–235 (PRIIRPQPPN…SGNASRSRRV (132 aa)) form a disordered region. The segment covering 127-139 (PQKTQSADQSALQ) has biased composition (polar residues). Residues 158-188 (TTSASVGQQQHVVSGSSGQQPQQGAQSSTVQ) are compositionally biased toward low complexity. Positions 220 to 235 (LSHTGQSGNASRSRRV) are enriched in polar residues.

Belongs to the herpesviridae small capsomere-interacting protein family. As to quaternary structure, interacts with the major capsid protein/MCP.

It localises to the virion. Its subcellular location is the host nucleus. Functionally, participates in the assembly of the infectious particles by decorating the outer surface of the capsid shell and thus forming a layer between the capsid and the tegument. Complexes composed of the capsid protein VP5 and VP26 assemble together in the host cytoplasm and are translocated to the nucleus, where they accumulate and participate in capsid assembly. Participates in the assembly of the infectious particles by decorating the outer surface of the capsid shell and thus forming a layer between the capsid and the tegument. Complexes composed of the major capsid protein and small capsomere-interacting protein/SCP assemble together in the host cytoplasm and are translocated to the nucleus, where they accumulate and participate in capsid assembly. The protein is Small capsomere-interacting protein of Homo sapiens (Human).